Reading from the N-terminus, the 1101-residue chain is Carbamoyl phosphate synthase large chain (1101 aa).

A carboxyphosphate synthetic domain region spans residues 1–402; sequence MPKRTDLKSV…ALQKALRSLE (402 aa). Residues Arg129, Arg169, Gly175, Gly176, Glu208, Ile210, Glu215, Gly241, Val242, His243, Gln285, and Glu299 each coordinate ATP. One can recognise an ATP-grasp 1 domain in the interval 133-328; sequence KGVVERAGGE…IAKIATKLAL (196 aa). Positions 285, 299, and 301 each coordinate Mg(2+). The Mn(2+) site is built by Gln285, Glu299, and Asn301. Residues 403 to 544 are oligomerization domain; it reads QKGSELAFPQ…YRYSSYDLET (142 aa). Residues 545–947 form a carbamoyl phosphate synthetic domain region; it reads EVAPHEGESV…AFAKSQSAAG (403 aa). One can recognise an ATP-grasp 2 domain in the interval 675–866; sequence ALVLERAGLV…LAKAAARIGV (192 aa). ATP contacts are provided by Arg711, Arg750, Leu752, Glu757, Gly782, Ile783, His784, Ser785, Gln825, and Glu837. The Mg(2+) site is built by Gln825, Glu837, and Asn839. Mn(2+)-binding residues include Gln825, Glu837, and Asn839. Residues 948-1093 form the MGS-like domain; sequence GPLPTSGRVF…QEHDARLQQA (146 aa). The interval 948-1101 is allosteric domain; that stretch reads GPLPTSGRVF…QAVAGPEAAA (154 aa).

The protein belongs to the CarB family. As to quaternary structure, composed of two chains; the small (or glutamine) chain promotes the hydrolysis of glutamine to ammonia, which is used by the large (or ammonia) chain to synthesize carbamoyl phosphate. Tetramer of heterodimers (alpha,beta)4. It depends on Mg(2+) as a cofactor. The cofactor is Mn(2+).

It carries out the reaction hydrogencarbonate + L-glutamine + 2 ATP + H2O = carbamoyl phosphate + L-glutamate + 2 ADP + phosphate + 2 H(+). It catalyses the reaction hydrogencarbonate + NH4(+) + 2 ATP = carbamoyl phosphate + 2 ADP + phosphate + 2 H(+). The protein operates within amino-acid biosynthesis; L-arginine biosynthesis; carbamoyl phosphate from bicarbonate: step 1/1. It functions in the pathway pyrimidine metabolism; UMP biosynthesis via de novo pathway; (S)-dihydroorotate from bicarbonate: step 1/3. Its function is as follows. Large subunit of the glutamine-dependent carbamoyl phosphate synthetase (CPSase). CPSase catalyzes the formation of carbamoyl phosphate from the ammonia moiety of glutamine, carbonate, and phosphate donated by ATP, constituting the first step of 2 biosynthetic pathways, one leading to arginine and/or urea and the other to pyrimidine nucleotides. The large subunit (synthetase) binds the substrates ammonia (free or transferred from glutamine from the small subunit), hydrogencarbonate and ATP and carries out an ATP-coupled ligase reaction, activating hydrogencarbonate by forming carboxy phosphate which reacts with ammonia to form carbamoyl phosphate. This chain is Carbamoyl phosphate synthase large chain, found in Micrococcus luteus (strain ATCC 4698 / DSM 20030 / JCM 1464 / CCM 169 / CCUG 5858 / IAM 1056 / NBRC 3333 / NCIMB 9278 / NCTC 2665 / VKM Ac-2230) (Micrococcus lysodeikticus).